The following is a 174-amino-acid chain: NADH-ubiquinone oxidoreductase chain 6 (174 aa).

A run of 4 helical transmembrane segments spans residues 24–44 (LALGLTLLIQTIFVCLLTGLM), 53–73 (ILFLIFLGGMLVLFIYVTSLA), 82–102 (MKLTLFSSLILIFMLILSFIM), and 143–163 (FITILLMNYLLITLIVIVKIT).

Belongs to the complex I subunit 6 family.

The protein localises to the mitochondrion membrane. The enzyme catalyses a ubiquinone + NADH + 5 H(+)(in) = a ubiquinol + NAD(+) + 4 H(+)(out). Functionally, core subunit of the mitochondrial membrane respiratory chain NADH dehydrogenase (Complex I) that is believed to belong to the minimal assembly required for catalysis. Complex I functions in the transfer of electrons from NADH to the respiratory chain. The immediate electron acceptor for the enzyme is believed to be ubiquinone. In Drosophila melanogaster (Fruit fly), this protein is NADH-ubiquinone oxidoreductase chain 6 (mt:ND6).